We begin with the raw amino-acid sequence, 221 residues long: Urease accessory protein UreE (221 aa).

The tract at residues 160–194 (VPGTNKTTGDLAEEEQETERHEPHAHAIGEHHHEK) is disordered. Over residues 177–194 (TERHEPHAHAIGEHHHEK) the composition is skewed to basic and acidic residues.

It belongs to the UreE family.

Its subcellular location is the cytoplasm. Its function is as follows. Involved in urease metallocenter assembly. Binds nickel. Probably functions as a nickel donor during metallocenter assembly. The polypeptide is Urease accessory protein UreE (Bifidobacterium longum subsp. infantis (strain ATCC 15697 / DSM 20088 / JCM 1222 / NCTC 11817 / S12)).